Here is a 217-residue protein sequence, read N- to C-terminus: Homologous-pairing protein 2 homolog (217 aa).

Residues 89 to 117 (LDASIMALTAKVQGLQQSCRHMEAELKEL) are interaction with NR3C1, homodimerization and transcriptional activation almost abolished when missing. A coiled-coil region spans residues 93–153 (IMALTAKVQG…LKNIKAATNH (61 aa)). Positions 118 to 182 (TSALTTPEMQ…WRKRKRMTTE (65 aa)) are DNA-binding. An interaction with NR3C1 decreased when missing region spans residues 118-182 (TSALTTPEMQ…WRKRKRMTTE (65 aa)).

Belongs to the HOP2 family. In terms of assembly, forms a stable heterodimer with MND1. Interacts with PSMC3/TBP1. Interacts with the DNA-binding domain of the nuclear receptors NR3C1/GR, ESR2/ER-beta, THRB and RXRA. In terms of processing, phosphorylated by PKA, PKC and MAPK.

The protein localises to the nucleus. Functionally, plays an important role in meiotic recombination. Stimulates DMC1-mediated strand exchange required for pairing homologous chromosomes during meiosis. The complex PSMC3IP/MND1 binds DNA, stimulates the recombinase activity of DMC1 as well as DMC1 D-loop formation from double-strand DNA. This complex stabilizes presynaptic RAD51 and DMC1 filaments formed on single strand DNA to capture double-strand DNA. This complex stimulates both synaptic and presynaptic critical steps in RAD51 and DMC1-promoted homologous pairing. May inhibit HIV-1 viral protein TAT activity and modulate the activity of proteasomes through association with PSMC3. Plays a role as a coactivator in nuclear receptor-mediated transcription. The chain is Homologous-pairing protein 2 homolog (Psmc3ip) from Rattus norvegicus (Rat).